A 606-amino-acid polypeptide reads, in one-letter code: MWMTPKRIRMEVDEALVFRPEWTQRYLVVEPAEGDGALCLVCRRLVASTRERDVRRHYEAEHEFYERFVGDEERAALVERLRQGDMSLAAVLTPEERATRAGLGLCRFLALKGRGWGEGDFVHQCMEVLLREVLPDHVGVLEGIDLSPEITRQRILSIDSNLRSQLFNRARDFKAYSLALDDQAFVAYENYLLVFIRGVGRDLEVQEDLLTIINLTHHFSVGALMSAILEALQTAGLSLQRMVGLTTTHTLRMIGENSGLVSYMREKAVSPNCWNVIHYSGFLHLELLSSYDVDINQIINTISEWVVMIKTRGVRRPEFQPLLTESESEHGERVNGRCLNNWLRRGKTLKLIFSLRKEIEAFLVSVGATTVHFSDKQWLCDFGFLVDIMDYLREISEELQISKVFAAAAFERICTFEGKLSSLQRHMEEVNLTDFPAFSIIVDELKQQFKEDQKIFDPDRYQMVISRLQKDFERHFKDLRFIKKDLELFSNPFSFKPEYAPISVRVELTKLQANTDLWNEYRVKDLGQFYAGLSGEAYPIIKGVAYKVASLFDSNQICDKAFAYLTRNQHTLSQPLTDEHLQALFRVATTEMDPRWDDLVRERNDS.

At Ser-147 the chain carries Phosphoserine.

In terms of assembly, interacts with EPM2A.

Its subcellular location is the endoplasmic reticulum. The sequence is that of EPM2A-interacting protein 1 (Epm2aip1) from Mus musculus (Mouse).